The following is a 285-amino-acid chain: Chalcone synthase 6-4 (285 aa).

Residue Cys60 is part of the active site.

The protein belongs to the thiolase-like superfamily. Chalcone/stilbene synthases family.

It carries out the reaction (E)-4-coumaroyl-CoA + 3 malonyl-CoA + 3 H(+) = 2',4,4',6'-tetrahydroxychalcone + 3 CO2 + 4 CoA. It functions in the pathway secondary metabolite biosynthesis; flavonoid biosynthesis. Functionally, the primary product of this enzyme is 4,2',4',6'-tetrahydroxychalcone (also termed naringenin-chalcone or chalcone) which can under specific conditions spontaneously isomerize into naringenin. In Medicago sativa (Alfalfa), this protein is Chalcone synthase 6-4 (CHS6-4).